We begin with the raw amino-acid sequence, 303 residues long: Putative F-box protein At5g62060 (303 aa).

The 48-residue stretch at 27–74 (KSRYIDIPLDITVEILKKLPAKSLVRFQCVSKQWSTIIGSRRDFIDSI) folds into the F-box domain.

This is Putative F-box protein At5g62060 from Arabidopsis thaliana (Mouse-ear cress).